The following is an 89-amino-acid chain: Small ribosomal subunit protein uS19 (89 aa).

It belongs to the universal ribosomal protein uS19 family.

Functionally, protein S19 forms a complex with S13 that binds strongly to the 16S ribosomal RNA. This chain is Small ribosomal subunit protein uS19, found in Xanthomonas campestris pv. campestris (strain 8004).